The following is a 360-amino-acid chain: MFLWLAHFSNWLTGLNIFQYTTFRAVMAALTALAFSLMFGPWTIRRLTALKCGQAVRTDGPQTHLVKNGTPTMGGSLILTAITVSTLLWGNWANPYIWILLGVLLATGALGFYDDWRKVVYKDPNGVSAKFKMVWQSSVAIIAGLALFYLAANSANNILIVPFFKQIALPLGVVGFLVLSYLTIVGTSNAVNLTDGLDGLATFPVVLVAAGLAIFAYASGHSQFAQYLQLPYVAGANEVVIFCTAMCGACLGFLWFNAYPAQVFMGDVGALALGAALGTVAVIVRQEFVLVIMGGLFVVEAVSVMLQVGWYKKTKKRIFLMAPIHHHYEQKGWKETQVVVRFWIITIVLVLIGLSTLKIR.

Transmembrane regions (helical) follow at residues 24–44 (RAVM…PWTI), 69–89 (GTPT…TLLW), 92–112 (WANP…ALGF), 133–153 (MVWQ…LAAN), 158–178 (ILIV…GFLV), 199–219 (GLAT…AYAS), 239–259 (VVIF…FNAY), 263–283 (VFMG…VAVI), 288–308 (FVLV…MLQV), and 337–357 (QVVV…LSTL).

Belongs to the glycosyltransferase 4 family. MraY subfamily. The cofactor is Mg(2+).

The protein localises to the cell inner membrane. It carries out the reaction UDP-N-acetyl-alpha-D-muramoyl-L-alanyl-gamma-D-glutamyl-meso-2,6-diaminopimeloyl-D-alanyl-D-alanine + di-trans,octa-cis-undecaprenyl phosphate = di-trans,octa-cis-undecaprenyl diphospho-N-acetyl-alpha-D-muramoyl-L-alanyl-D-glutamyl-meso-2,6-diaminopimeloyl-D-alanyl-D-alanine + UMP. Its pathway is cell wall biogenesis; peptidoglycan biosynthesis. Functionally, catalyzes the initial step of the lipid cycle reactions in the biosynthesis of the cell wall peptidoglycan: transfers peptidoglycan precursor phospho-MurNAc-pentapeptide from UDP-MurNAc-pentapeptide onto the lipid carrier undecaprenyl phosphate, yielding undecaprenyl-pyrophosphoryl-MurNAc-pentapeptide, known as lipid I. The protein is Phospho-N-acetylmuramoyl-pentapeptide-transferase of Neisseria meningitidis serogroup A / serotype 4A (strain DSM 15465 / Z2491).